The sequence spans 253 residues: Chloride intracellular channel protein 4 (253 aa).

An N-acetylalanine modification is found at Ala2. The interval 2–101 (ALSMPLNGLK…EEFLEEVLCP (100 aa)) is required for insertion into the membrane. The residue at position 4 (Ser4) is a Phosphoserine. Lys24 is modified (N6-acetyllysine). Positions 35–38 (CPFS) match the G-site motif. Residues 37–57 (FSQRLFMILWLKGVVFSVTTV) traverse the membrane as a helical segment. Residues 81-244 (NSEVKTDVNK…PSDKEVEIAY (164 aa)) enclose the GST C-terminal domain. Lys130 bears the N6-acetyllysine mark. Ser132, Ser167, and Ser236 each carry phosphoserine. Tyr244 carries the phosphotyrosine modification.

The protein belongs to the chloride channel CLIC family. Component of a multimeric complex consisting of several cytoskeletal proteins, including actin, ezrin, alpha-actinin, gelsolin, IQGAP1 and CLIC5A. Binds directly to brain dynamin I in a complex containing actin, tubulin and 14-3-3 isoforms. Monomer. Interacts with HRH3. Interacts with AKAP9. Detected in epithelial cells from colon, esophagus and kidney (at protein level). Expression is prominent in heart, kidney, placenta and skeletal muscle.

The protein resides in the cytoplasm. Its subcellular location is the cytoskeleton. It localises to the microtubule organizing center. The protein localises to the centrosome. It is found in the cytoplasmic vesicle membrane. The protein resides in the nucleus. Its subcellular location is the cell membrane. It localises to the mitochondrion. The protein localises to the cell junction. It is found in the endoplasmic reticulum membrane. It catalyses the reaction chloride(in) = chloride(out). The catalysed reaction is thiocyanate(in) = thiocyanate(out). It carries out the reaction nitrate(in) = nitrate(out). The enzyme catalyses iodide(out) = iodide(in). It catalyses the reaction bromide(in) = bromide(out). The catalysed reaction is fluoride(in) = fluoride(out). It carries out the reaction choline(out) = choline(in). Its activity is regulated as follows. Inhibited by rapamycin, amphotericin B and IAA-94. Functionally, in the soluble state, catalyzes glutaredoxin-like thiol disulfide exchange reactions with reduced glutathione as electron donor. Can insert into membranes and form voltage-dependent multi-ion conductive channels. Membrane insertion seems to be redox-regulated and may occur only under oxidizing conditions. Has alternate cellular functions like a potential role in angiogenesis or in maintaining apical-basolateral membrane polarity during mitosis and cytokinesis. Could also promote endothelial cell proliferation and regulate endothelial morphogenesis (tubulogenesis). Promotes cell-surface expression of HRH3. This Homo sapiens (Human) protein is Chloride intracellular channel protein 4.